Here is a 355-residue protein sequence, read N- to C-terminus: RGG repeats nuclear RNA binding protein A (355 aa).

Ala2 is subject to N-acetylalanine. Residues Lys26–Glu225 form a disordered region. Over residues Ser37 to Leu47 the composition is skewed to low complexity. Composition is skewed to gly residues over residues Arg67–Gly81 and Gly114–Gly141. Residues Gly132–Asn139 carry the Nuclear localization signal motif. A compositionally biased stretch (basic and acidic residues) spans Asp143–Ser168. The Arginine-rich RNA-binding motif E-R-P-R-R-X-[F/Y]-[E/D]-R-R-S signature appears at Glu145–Ser155. The segment covering Gly177 to Val190 has biased composition (low complexity). Basic and acidic residues-rich tracts occupy residues Glu191–Val202 and Ala209–Glu225. The FF domain maps to Ile234–Glu289. Ser268 is subject to Phosphoserine. Positions Gly277 to Lys292 are enriched in basic and acidic residues. The disordered stretch occupies residues Gly277–Lys355. Residues Gly323–Gly333 are compositionally biased toward gly residues. Position 351 is a phosphoserine (Ser351).

Belongs to the SERBP1-HABP4 family. Expressed in seedlings, leaves, roots, inflorescences, and siliques. Constitutively expressed in seedlings and roots.

The protein localises to the cytoplasm. It is found in the perinuclear region. Its subcellular location is the nucleus. Functionally, ribosome-binding protein that acts as a regulator of mRNA translation by promoting ribosome inactivation. Binds RNA. Regulates responses to abscisic acid (ABA). Promotes stomata closure in drought conditions. Involved in resistance to salt and drought stresses via the accumulation of Pro. This chain is RGG repeats nuclear RNA binding protein A, found in Arabidopsis thaliana (Mouse-ear cress).